We begin with the raw amino-acid sequence, 448 residues long: Methylenetetrahydrofolate--tRNA-(uracil-5-)-methyltransferase TrmFO (448 aa).

13–18 (GAGLAG) contributes to the FAD binding site.

This sequence belongs to the MnmG family. TrmFO subfamily. FAD serves as cofactor.

Its subcellular location is the cytoplasm. The catalysed reaction is uridine(54) in tRNA + (6R)-5,10-methylene-5,6,7,8-tetrahydrofolate + NADH + H(+) = 5-methyluridine(54) in tRNA + (6S)-5,6,7,8-tetrahydrofolate + NAD(+). It carries out the reaction uridine(54) in tRNA + (6R)-5,10-methylene-5,6,7,8-tetrahydrofolate + NADPH + H(+) = 5-methyluridine(54) in tRNA + (6S)-5,6,7,8-tetrahydrofolate + NADP(+). Its function is as follows. Catalyzes the folate-dependent formation of 5-methyl-uridine at position 54 (M-5-U54) in all tRNAs. The polypeptide is Methylenetetrahydrofolate--tRNA-(uracil-5-)-methyltransferase TrmFO (Streptococcus pyogenes serotype M3 (strain ATCC BAA-595 / MGAS315)).